The primary structure comprises 246 residues: Octanoyltransferase (246 aa).

The BPL/LPL catalytic domain maps to 46-234 (GTAGEMVWLV…AFEEVFGAAE (189 aa)). Substrate contacts are provided by residues 85-92 (RGGEYTYH), 165-167 (AIG), and 178-180 (GIA). Residue cysteine 196 is the Acyl-thioester intermediate of the active site.

This sequence belongs to the LipB family.

Its subcellular location is the cytoplasm. The catalysed reaction is octanoyl-[ACP] + L-lysyl-[protein] = N(6)-octanoyl-L-lysyl-[protein] + holo-[ACP] + H(+). It participates in protein modification; protein lipoylation via endogenous pathway; protein N(6)-(lipoyl)lysine from octanoyl-[acyl-carrier-protein]: step 1/2. Its function is as follows. Catalyzes the transfer of endogenously produced octanoic acid from octanoyl-acyl-carrier-protein onto the lipoyl domains of lipoate-dependent enzymes. Lipoyl-ACP can also act as a substrate although octanoyl-ACP is likely to be the physiological substrate. The sequence is that of Octanoyltransferase from Chelativorans sp. (strain BNC1).